The following is a 441-amino-acid chain: MKAAVDLKPTLTIIKTEKVDLELFPSPDMECADVPLLTPSSKEMMSQALKATFSGFTKEQQRLGIPKDPRQWTETHVRDWVMWAVNEFSLKGVDFQKFCMNGAALCALGKECFLELAPDFVGDILWEHLEILQKEDVKPYQVNGVNPTYPESRYTSDYFISYGIEHAQCVPPSEFSEPSFITESYQTLHPISSEELLSLKYENDYPSVILRDPLQTDTLQTDYFAIKQEVLTPDNMCMGRASRGKLGGQDSFESIESYDSCDRLTQSWSSQSSFNSLQRVPSYDSFDSEDYPAALPNHKPKGTFKDYVRDRADLNKDKPVIPAAALAGYTGSGPIQLWQFLLELLTDKSCQSFISWTGDGWEFKLSDPDEVARRWGKRKNKPKMNYEKLSRGLRYYYDKNIIHKTAGKRYVYRFVCDLQSLLGYTPEELHAMLDVKPDADE.

N6-acetyllysine; alternate is present on residues Lys-8 and Lys-15. Glycyl lysine isopeptide (Lys-Gly) (interchain with G-Cter in SUMO2); alternate cross-links involve residues Lys-8 and Lys-15. A Glycyl lysine isopeptide (Lys-Gly) (interchain with G-Cter in SUMO); alternate cross-link involves residue Lys-15. Thr-38 is modified (phosphothreonine; by MAPK). The PNT domain occupies 51 to 136; sequence ATFSGFTKEQ…EHLEILQKED (86 aa). The tract at residues 130–243 is activation domain; required for transcription activation; sequence EILQKEDVKP…DNMCMGRASR (114 aa). Residue Lys-138 forms a Glycyl lysine isopeptide (Lys-Gly) (interchain with G-Cter in SUMO2) linkage. Position 223 is a phosphotyrosine (Tyr-223). Lys-227 participates in a covalent cross-link: Glycyl lysine isopeptide (Lys-Gly) (interchain with G-Cter in SUMO). Residues Ser-251 and Ser-254 each carry the phosphoserine modification. Thr-265 bears the Phosphothreonine mark. Phosphoserine occurs at positions 267, 270, 282, and 285. The helix HI-1 stretch occupies residues 304–312; that stretch reads FKDYVRDRA. The residue at position 305 (Lys-305) is an N6-acetyllysine. Residues 323–330 form a helix HI-2 region; sequence AAALAGYT. Residues 335–415 constitute a DNA-binding region (ETS); the sequence is IQLWQFLLEL…AGKRYVYRFV (81 aa). The interval 418–422 is helix H4; that stretch reads LQSLL. The interval 426–432 is helix H5; it reads PEELHAM.

This sequence belongs to the ETS family. As to quaternary structure, binds DNA as a homodimer; homodimerization is required for transcription activation. Interacts with MAF and MAFB. Interacts with PAX5; the interaction alters DNA-binding properties. Interacts with DAXX. Interacts with UBE2I. Interacts with SP100; the interaction is direct and modulates ETS1 transcriptional activity. Post-translationally, sumoylated on Lys-15 and Lys-227, preferentially with SUMO2; which inhibits transcriptional activity. In terms of processing, ubiquitinated; which induces proteasomal degradation. Phosphorylation at Ser-251, Ser-282 and Ser-285 by CaMK2/CaMKII in response to calcium signaling decreases affinity for DNA: an increasing number of phosphoserines causes DNA-binding to become progressively weaker.

The protein localises to the nucleus. The protein resides in the cytoplasm. Autoinhibited by a module composed of four alpha helices (HI-1, HI-2, H4, and H5) that flank the DNA-binding ETS domain, reducing the affinity for DNA. Phosphorylation by CaMK2/CaMKII in response to calcium signaling decreases affinity for DNA. Functionally, transcription factor. Directly controls the expression of cytokine and chemokine genes in a wide variety of different cellular contexts. May control the differentiation, survival and proliferation of lymphoid cells. May also regulate angiogenesis through regulation of expression of genes controlling endothelial cell migration and invasion. In Rattus norvegicus (Rat), this protein is Protein C-ets-1 (Ets1).